We begin with the raw amino-acid sequence, 205 residues long: Probable calcium-binding protein CML41 (205 aa).

The tract at residues 26–55 (SFQNRRRSPKSNSSSTLNSPRSNSDDNNNI) is disordered. A compositionally biased stretch (low complexity) spans 35–54 (KSNSSSTLNSPRSNSDDNNN). EF-hand domains follow at residues 60-95 (ASKE…VGEY), 96-131 (ISHE…RDLY), 137-173 (DGDG…LGES), and 174-205 (RTYG…MMTV). Residues Asp-73, Asp-75, Asp-77, Lys-79, Glu-84, Asp-109, Asp-111, Asp-113, Ser-115, and Asp-120 each coordinate Ca(2+). Positions 187, 189, 191, and 198 each coordinate Ca(2+).

Potential calcium sensor. This Arabidopsis thaliana (Mouse-ear cress) protein is Probable calcium-binding protein CML41 (CML41).